Here is a 277-residue protein sequence, read N- to C-terminus: Adenylate kinase (277 aa).

Residue 72–77 participates in ATP binding; the sequence is GAGKGT. The NMP stretch occupies residues 92-121; the sequence is ATGDMLRSQVAKQTALGVQAKKIMDQGGLV. AMP is bound by residues Thr93, Arg98, 119 to 121, 148 to 151, and Gln155; these read GLV and GFPR. Residues 189 to 226 form an LID region; it reads GRLVHPASGRSYHKLFNPPKVAMTDDVTGDPLVQRSDD. Residues Arg190 and 199 to 200 each bind ATP; that span reads SY. Residues Arg223 and Arg234 each contribute to the AMP site. Position 262 (Gln262) interacts with ATP.

The protein belongs to the adenylate kinase family. AK2 subfamily. In terms of assembly, monomer.

It localises to the cytoplasm. The protein resides in the cytosol. The protein localises to the mitochondrion intermembrane space. It carries out the reaction AMP + ATP = 2 ADP. Functionally, catalyzes the reversible transfer of the terminal phosphate group between ATP and AMP. Plays an important role in cellular energy homeostasis and in adenine nucleotide metabolism. Adenylate kinase activity is critical for regulation of the phosphate utilization and the AMP de novo biosynthesis pathways. In Eremothecium gossypii (strain ATCC 10895 / CBS 109.51 / FGSC 9923 / NRRL Y-1056) (Yeast), this protein is Adenylate kinase.